The chain runs to 264 residues: 3-methyl-2-oxobutanoate hydroxymethyltransferase (264 aa).

Aspartate 45 and aspartate 84 together coordinate Mg(2+). Residues 45–46 (DS), aspartate 84, and lysine 113 contribute to the 3-methyl-2-oxobutanoate site. Glutamate 115 provides a ligand contact to Mg(2+). Glutamate 182 (proton acceptor) is an active-site residue.

It belongs to the PanB family. In terms of assembly, homodecamer; pentamer of dimers. The cofactor is Mg(2+).

Its subcellular location is the cytoplasm. It catalyses the reaction 3-methyl-2-oxobutanoate + (6R)-5,10-methylene-5,6,7,8-tetrahydrofolate + H2O = 2-dehydropantoate + (6S)-5,6,7,8-tetrahydrofolate. The protein operates within cofactor biosynthesis; (R)-pantothenate biosynthesis; (R)-pantoate from 3-methyl-2-oxobutanoate: step 1/2. Functionally, catalyzes the reversible reaction in which hydroxymethyl group from 5,10-methylenetetrahydrofolate is transferred onto alpha-ketoisovalerate to form ketopantoate. The sequence is that of 3-methyl-2-oxobutanoate hydroxymethyltransferase from Helicobacter hepaticus (strain ATCC 51449 / 3B1).